The following is a 213-amino-acid chain: Heat shock protein 30C (213 aa).

Residues 61–80 (SKDTEMRRITDQNRQSRESE) show a composition bias toward basic and acidic residues. Disordered stretches follow at residues 61–93 (SKDT…GKDH) and 174–213 (ALPP…QKVD). One can recognise a sHSP domain in the interval 76–188 (SRESEGTSPN…PETPIPISMD (113 aa)).

The protein belongs to the small heat shock protein (HSP20) family.

This Xenopus laevis (African clawed frog) protein is Heat shock protein 30C (hsp30c).